Reading from the N-terminus, the 271-residue chain is Regulatory protein RecX (271 aa).

It belongs to the RecX family.

The protein resides in the cytoplasm. In terms of biological role, modulates RecA activity. This chain is Regulatory protein RecX, found in Lactobacillus gasseri (strain ATCC 33323 / DSM 20243 / BCRC 14619 / CIP 102991 / JCM 1131 / KCTC 3163 / NCIMB 11718 / NCTC 13722 / AM63).